The chain runs to 221 residues: 7-cyano-7-deazaguanine synthase (221 aa).

7–17 lines the ATP pocket; the sequence is LSGGMDSTTLL. Residues C183, C191, C194, and C197 each contribute to the Zn(2+) site.

This sequence belongs to the QueC family. Homodimer. Requires Zn(2+) as cofactor.

It catalyses the reaction 7-carboxy-7-deazaguanine + NH4(+) + ATP = 7-cyano-7-deazaguanine + ADP + phosphate + H2O + H(+). The protein operates within purine metabolism; 7-cyano-7-deazaguanine biosynthesis. Its function is as follows. Catalyzes the ATP-dependent conversion of 7-carboxy-7-deazaguanine (CDG) to 7-cyano-7-deazaguanine (preQ(0)). The sequence is that of 7-cyano-7-deazaguanine synthase from Caldicellulosiruptor bescii (strain ATCC BAA-1888 / DSM 6725 / KCTC 15123 / Z-1320) (Anaerocellum thermophilum).